The sequence spans 562 residues: NAD-dependent malic enzyme (562 aa).

Catalysis depends on Y101, which acts as the Proton donor. R154 serves as a coordination point for NAD(+). K172 (proton acceptor) is an active-site residue. Residues E243, D244, and D267 each coordinate a divalent metal cation. The NAD(+) site is built by D267 and N415.

This sequence belongs to the malic enzymes family. Homotetramer. The cofactor is Mg(2+). Requires Mn(2+) as cofactor.

The catalysed reaction is (S)-malate + NAD(+) = pyruvate + CO2 + NADH. It carries out the reaction oxaloacetate + H(+) = pyruvate + CO2. This chain is NAD-dependent malic enzyme, found in Shewanella baltica (strain OS155 / ATCC BAA-1091).